The sequence spans 224 residues: Ribose-5-phosphate isomerase A (224 aa).

Substrate-binding positions include 26–29 (TGST), 81–84 (DGAD), and 94–97 (KGGG). The active-site Proton acceptor is E103. Residue K121 coordinates substrate.

This sequence belongs to the ribose 5-phosphate isomerase family. As to quaternary structure, homodimer.

It carries out the reaction aldehydo-D-ribose 5-phosphate = D-ribulose 5-phosphate. It participates in carbohydrate degradation; pentose phosphate pathway; D-ribose 5-phosphate from D-ribulose 5-phosphate (non-oxidative stage): step 1/1. Catalyzes the reversible conversion of ribose-5-phosphate to ribulose 5-phosphate. The sequence is that of Ribose-5-phosphate isomerase A from Listeria monocytogenes serotype 4b (strain F2365).